The chain runs to 214 residues: Intermembrane phospholipid transport system binding protein MlaC (214 aa).

Residues Met-1–Ala-28 form the signal peptide.

It belongs to the MlaC/ttg2D family.

The protein localises to the periplasm. Its function is as follows. Involved in a phospholipid transport pathway that maintains lipid asymmetry in the outer membrane by retrograde trafficking of phospholipids from the outer membrane to the inner membrane. May transfer phospholipid across the periplasmic space and deliver it to the MlaFEDB complex at the inner membrane. This Haemophilus influenzae (strain ATCC 51907 / DSM 11121 / KW20 / Rd) protein is Intermembrane phospholipid transport system binding protein MlaC.